The chain runs to 1063 residues: Alkane uptake protein B (1063 aa).

The N-terminal stretch at Met-1–Ala-17 is a signal peptide. The N-palmitoyl cysteine moiety is linked to residue Cys-18. A lipid anchor (S-diacylglycerol cysteine) is attached at Cys-18.

In terms of assembly, interacts with the outer membrane protein AupA.

It is found in the cell inner membrane. Functionally, required for growth on alkanes. Probably involved in the uptake of micelle-solubilized alkanes. May facilitate the transfer of alkanes from the outer membrane to the inner membrane. This is Alkane uptake protein B from Marinobacter nauticus (strain ATCC 49840 / DSM 8798 / CIP 103578 / SP17) (Marinobacter hydrocarbonoclasticus).